A 340-amino-acid polypeptide reads, in one-letter code: Protein B17 (340 aa).

It belongs to the orthopoxvirus B17 protein family.

The polypeptide is Protein B17 (Vaccinia virus (strain Copenhagen) (VACV)).